An 83-amino-acid chain; its full sequence is Exodeoxyribonuclease 7 small subunit (83 aa).

Belongs to the XseB family. Heterooligomer composed of large and small subunits.

It is found in the cytoplasm. The enzyme catalyses Exonucleolytic cleavage in either 5'- to 3'- or 3'- to 5'-direction to yield nucleoside 5'-phosphates.. Its function is as follows. Bidirectionally degrades single-stranded DNA into large acid-insoluble oligonucleotides, which are then degraded further into small acid-soluble oligonucleotides. This Rhizobium meliloti (strain 1021) (Ensifer meliloti) protein is Exodeoxyribonuclease 7 small subunit.